The following is a 198-amino-acid chain: MFYLLAGLGNPGKKYELSRHNAGFMIVDAIASEFYFPSFRERHNALISIGNIKSHRVILVKPWTFMNNSGAPIMSIASLYKIPLDNIIIFHDEVEINFCTIRVKKSGGNAGHNGLKSIDNLLGKDYWRVRFGIGRPINKTNLKIDLSYYVLSQFHNIKAVNNTILNIVEHITLLLEKKPSMFMEKVKNLIKYEDIPTE.

Tyr15 lines the tRNA pocket. His20 serves as the catalytic Proton acceptor. TRNA-binding residues include Phe65, Asn67, and Asn113.

This sequence belongs to the PTH family. As to quaternary structure, monomer.

It is found in the cytoplasm. The catalysed reaction is an N-acyl-L-alpha-aminoacyl-tRNA + H2O = an N-acyl-L-amino acid + a tRNA + H(+). Hydrolyzes ribosome-free peptidyl-tRNAs (with 1 or more amino acids incorporated), which drop off the ribosome during protein synthesis, or as a result of ribosome stalling. Functionally, catalyzes the release of premature peptidyl moieties from peptidyl-tRNA molecules trapped in stalled 50S ribosomal subunits, and thus maintains levels of free tRNAs and 50S ribosomes. The protein is Peptidyl-tRNA hydrolase of Ehrlichia chaffeensis (strain ATCC CRL-10679 / Arkansas).